Consider the following 328-residue polypeptide: 2-oxoglutarate-dependent dioxygenase gloF (328 aa).

Residues 175 to 289 enclose the Fe2OG dioxygenase domain; the sequence is DTSELRMNHY…RYSVAYFGKP (115 aa). The Fe cation site is built by H201, D203, and H261. A 2-oxoglutarate-binding site is contributed by R280.

The protein belongs to the iron/ascorbate-dependent oxidoreductase family. Fe(2+) serves as cofactor.

It functions in the pathway mycotoxin biosynthesis. 2-oxoglutarate-dependent dioxygenase; part of the gene cluster that mediates the biosynthesis of pneumocandins, lipohexapeptides of the echinocandin family that prevent fungal cell wall formation by non-competitive inhibition of beta-1,3-glucan synthase. The 10,12-dimethylmyristoyl side chain is synthesized by the reducing polyketide synthase gloL/GLPKS4. The thioesterase gloN/GLHYD exclusively interacts with gloL/GLPKS4 to maintain turnover of the polyketide side chain. The 10R,12S-dimethylmyristic acid is then transferred to the first thiolation domain of the nonribosomal peptide synthetase gloA/GLNRPS4 by the acyl-AMP ligase gloD/GLligase, followed by its acylation to L-ornithine to trigger elongation of the cyclic hexapeptide. L-ornithine, 4R-hydroxyl-L-proline (generated from L-proline by the dioxygenase gloF/GLOXY2), 3S-hydroxyl-L-homotyrosine (generated by gloG/GLHtyB, gloH/GLHtyA, gloI/GLHtyC, gloJ/GLHtyD and hydroxylated at C-3 by the dioxygenase gloM/GLOXY1), 3R-hydroxyl-L-glutamine (generated from L-glutamine probably by the dioxygenase gloE/GLOXY3) and 3S-hydroxyl-L-proline (generated from L-proline by the dioxygenase gloF/GLOXY2 to yield pneumocandin B0), or 3S-hydroxyl-4S-methyl-L-proline (generated from L-leucine by the dioxygenase gloC/GLOXY4 to yield pneumocandin A0) are sequentially added to the growing chain. The last C domain of gloA/GLNRPS4 is proposed to be responsible for cyclization by condensation to form the peptide bond between L-ornithine and 3S-hydroxyl-4S-methyl-L-proline (for pneumocandin A0) or 3S-hydroxyl-L-proline (for pneumocandin B0). Finally, the subsequent C-4 hydroxylation of 3S-hydroxyl-L-homotyrosine and L-ornithine dihydroxylation at C-4 and C-5 are performed by the cytochrome P450 monooxygenases gloP/GLP450-1 and gloO/GLP450-2, respectively. The chain is 2-oxoglutarate-dependent dioxygenase gloF from Glarea lozoyensis (strain ATCC 20868 / MF5171).